The chain runs to 288 residues: Acetyl-coenzyme A carboxylase carboxyl transferase subunit beta (288 aa).

The 255-residue stretch at 34-288 folds into the CoA carboxyltransferase N-terminal domain; sequence LFAKCPGCKQ…TLLSFHGGVQ (255 aa). Zn(2+) contacts are provided by C38, C41, C56, and C59. The C4-type zinc-finger motif lies at 38–59; it reads CPGCKQAIYQKDLGQAKICPNC.

Belongs to the AccD/PCCB family. In terms of assembly, acetyl-CoA carboxylase is a heterohexamer composed of biotin carboxyl carrier protein (AccB), biotin carboxylase (AccC) and two subunits each of ACCase subunit alpha (AccA) and ACCase subunit beta (AccD). Requires Zn(2+) as cofactor.

The protein localises to the cytoplasm. The enzyme catalyses N(6)-carboxybiotinyl-L-lysyl-[protein] + acetyl-CoA = N(6)-biotinyl-L-lysyl-[protein] + malonyl-CoA. It functions in the pathway lipid metabolism; malonyl-CoA biosynthesis; malonyl-CoA from acetyl-CoA: step 1/1. Functionally, component of the acetyl coenzyme A carboxylase (ACC) complex. Biotin carboxylase (BC) catalyzes the carboxylation of biotin on its carrier protein (BCCP) and then the CO(2) group is transferred by the transcarboxylase to acetyl-CoA to form malonyl-CoA. The sequence is that of Acetyl-coenzyme A carboxylase carboxyl transferase subunit beta from Streptococcus thermophilus (strain CNRZ 1066).